Here is a 505-residue protein sequence, read N- to C-terminus: Acetylcholine receptor subunit beta (505 aa).

An N-terminal signal peptide occupies residues 1 to 24 (MTPGALLLLLLGVLGAHLAPGARG). Residues 25-245 (SEAEGRLREK…VTFYLIIRRK (221 aa)) lie on the Extracellular side of the membrane. C152 and C166 are joined by a disulfide. N165 carries N-linked (GlcNAc...) asparagine glycosylation. A run of 3 helical transmembrane segments spans residues 246–270 (PLFYLVNVIAPCILITLLAIFVFYL), 278–295 (MGLSIFALLTLTVFLLLL), and 312–333 (YLMFTMVLVTFSVILSVVVLNL). The Cytoplasmic portion of the chain corresponds to 334–473 (HHRSPHTHQM…WQFVAMVVDR (140 aa)). A disordered region spans residues 365-391 (KPERDQMQEPPSIAPRDSPGSGWGRGT). Y394 bears the Phosphotyrosine; by Tyr-kinases mark. Residues 474-492 (LFLWTFIIFTSVGTLVIFL) form a helical membrane-spanning segment.

This sequence belongs to the ligand-gated ion channel (TC 1.A.9) family. Acetylcholine receptor (TC 1.A.9.1) subfamily. Beta-1/CHRNB1 sub-subfamily. In terms of assembly, pentamer of two alpha chains, and one each of the beta, delta, and gamma (in immature muscle) or epsilon (in mature muscle) chains. The muscle heteropentamer composed of alpha-1, beta-1, delta, epsilon subunits interacts with the alpha-conotoxin ImII.

The protein localises to the postsynaptic cell membrane. Its subcellular location is the cell membrane. The catalysed reaction is K(+)(in) = K(+)(out). It catalyses the reaction Na(+)(in) = Na(+)(out). In terms of biological role, after binding acetylcholine, the AChR responds by an extensive change in conformation that affects all subunits and leads to opening of an ion-conducting channel across the plasma membrane. In Bos taurus (Bovine), this protein is Acetylcholine receptor subunit beta (CHRNB1).